Here is a 599-residue protein sequence, read N- to C-terminus: MPSSLPGSQVPHPTLDAVDLVEKTLRNEGTSSSAPVLEEGDTDPWTLPQLKDTSQPWKELRVAGRLRRVAGSVLKACGLLGSLYFFICSLDVLSSAFQLLGSKVAGDIFKDNVVLSNPVAGLVIGVLVTALVQSSSTSSSIVVSMVAAKLLTVRVSVPIIMGVNVGTSITSTLVSMAQSGDRDEFQRAFSGSAVHGIFNWLTVLVLLPLESATALLERLSELALGAASLTPRAQAPDILKVLTKPLTHLIVQLDSDMIMSSATGNATNSSLIKHWCGTTGQPTQENSSCGAFGPCTEKNSTAPADRLPCRHLFAGTELTDLAVGCILLAGSLLVLCGCLVLIVKLLNSVLRGRVAQVVRTVINADFPFPLGWLGGYLAVLAGAGLTFALQSSSVFTAAVVPLMGVGVISLDRAYPLLLGSNIGTTTTALLAALASPADRMLSALQVALIHFFFNLAGILLWYLVPALRLPIPLARHFGVVTARYRWVAGVYLLLGFLLLPLAAFGLSLAGGMELAAVGGPLVGLVLLVILVTVLQRRRPAWLPVRLRSWAWLPVWLHSLEPWDRLVTRCCPCNVCSPPKATTKEAYCYENPEILASQQL.

Residues 1–76 (MPSSLPGSQV…RRVAGSVLKA (76 aa)) lie on the Cytoplasmic side of the membrane. Serine 4 is modified (phosphoserine). A helical membrane pass occupies residues 77 to 97 (CGLLGSLYFFICSLDVLSSAF). The Extracellular segment spans residues 98 to 111 (QLLGSKVAGDIFKD). Residues 112-132 (NVVLSNPVAGLVIGVLVTALV) form a helical membrane-spanning segment. Over 133-188 (QSSSTSSSIVVSMVAAKLLTVRVSVPIIMGVNVGTSITSTLVSMAQSGDRDEFQRA) the chain is Cytoplasmic. A helical transmembrane segment spans residues 189–209 (FSGSAVHGIFNWLTVLVLLPL). Residues 210-322 (ESATALLERL…FAGTELTDLA (113 aa)) are Extracellular-facing. 4 N-linked (GlcNAc...) asparagine glycosylation sites follow: asparagine 265, asparagine 268, asparagine 286, and asparagine 299. A disulfide bond links cysteine 276 and cysteine 309. The helical transmembrane segment at 323 to 343 (VGCILLAGSLLVLCGCLVLIV) threads the bilayer. Over 344–367 (KLLNSVLRGRVAQVVRTVINADFP) the chain is Cytoplasmic. The chain crosses the membrane as a helical span at residues 368–388 (FPLGWLGGYLAVLAGAGLTFA). Residues 389–445 (LQSSSVFTAAVVPLMGVGVISLDRAYPLLLGSNIGTTTTALLAALASPADRMLSALQ) are Extracellular-facing. Residues 446–466 (VALIHFFFNLAGILLWYLVPA) form a helical membrane-spanning segment. At 467-485 (LRLPIPLARHFGVVTARYR) the chain is on the cytoplasmic side. A helical transmembrane segment spans residues 486-506 (WVAGVYLLLGFLLLPLAAFGL). Over 507 to 510 (SLAG) the chain is Extracellular. The helical transmembrane segment at 511 to 531 (GMELAAVGGPLVGLVLLVILV) threads the bilayer. Residues 532–599 (TVLQRRRPAW…NPEILASQQL (68 aa)) are Cytoplasmic-facing.

This sequence belongs to the SLC34A transporter family. Expressed only in the kidney.

The protein localises to the apical cell membrane. It carries out the reaction 2 Na(+)(out) + phosphate(out) = 2 Na(+)(in) + phosphate(in). Involved in actively transporting phosphate into cells via Na(+) cotransport in the renal brush border membrane. The cotransport has a Na(+):Pi stoichiometry of 2:1 and is electroneutral. This is Sodium-dependent phosphate transport protein 2C (SLC34A3) from Homo sapiens (Human).